The following is an 801-amino-acid chain: Mitochondrial intermediate peptidase (801 aa).

The N-terminal 41 residues, Met-1 to Ala-41, are a transit peptide targeting the mitochondrion. The interval Arg-31 to Ala-54 is disordered. His-565 contributes to the Zn(2+) binding site. Glu-566 is an active-site residue. 2 residues coordinate Zn(2+): His-569 and His-572.

The protein belongs to the peptidase M3 family. Zn(2+) is required as a cofactor.

Its subcellular location is the mitochondrion matrix. It carries out the reaction Release of an N-terminal octapeptide as second stage of processing of some proteins imported into the mitochondrion.. Functionally, cleaves proteins, imported into the mitochondrion, to their mature size. While most mitochondrial precursor proteins are processed to the mature form in one step by mitochondrial processing peptidase (MPP), the sequential cleavage by MIP of an octapeptide after initial processing by MPP is a required step for a subgroup of nuclear-encoded precursor proteins destined for the matrix or the inner membrane. This is Mitochondrial intermediate peptidase (oct1) from Aspergillus clavatus (strain ATCC 1007 / CBS 513.65 / DSM 816 / NCTC 3887 / NRRL 1 / QM 1276 / 107).